The primary structure comprises 68 residues: Toxin Cg2 (68 aa).

One can recognise an LCN-type CS-alpha/beta domain in the interval Lys1–Ser66. Intrachain disulfides connect Cys12-Cys65, Cys16-Cys41, Cys25-Cys46, and Cys29-Cys48.

The protein belongs to the long (4 C-C) scorpion toxin superfamily. Sodium channel inhibitor family. In terms of tissue distribution, expressed by the venom gland.

The protein localises to the secreted. Binds to sodium channels (Nav) and inhibits them. This Centruroides gracilis (Slenderbrown scorpion) protein is Toxin Cg2.